Reading from the N-terminus, the 417-residue chain is MAWLTLYLLSVLWAVAGTSTRAQSSCSVPPDQQPWVDGLQALMENSVTDSDFPNPSILIAMNLAGAYNVEAQKLLTYQLMASDSADLTSGQLALTVMALTSSCRDPGSKVSTLLKKMENWSPSSPGAESSAFYGPGLAILALCQKSSEATLPIAVRFAKTLMMEPSPFNVDTGAVATLALTCMYNKIPVGSQENYRDLFGQALKAIVEKISLRIKADGIIGDIYSTGLAMQALSVTPEQPTKKWDCEKTMHTILNEIKQGKFQNPMSIAQILPSLKGKTYLDVPQVTCGPDHEVPPTLTDYPTPVPTSVSNITVIYTINNQLRGVDLLFNVTIEVSVKSGSVLLAVLEEAQRKNSMFKFETTMTSWGLIVSSINNIAENVNHKTYWEFLSGKTPLDEGVAYYIPFNHEHITANFTQY.

The signal sequence occupies residues M1 to T18. 3 cysteine pairs are disulfide-bonded: C26–C246, C103–C288, and C143–C182. D171 is a cob(II)alamin binding site. At S191 the chain carries Phosphoserine. Residues D222 and Q270 each contribute to the cob(II)alamin site. N-linked (GlcNAc...) asparagine glycans are attached at residues N311 and N330. Residues S365–V370 and W386–L395 contribute to the cob(II)alamin site. N413 is a glycosylation site (N-linked (GlcNAc...) asparagine).

The protein belongs to the eukaryotic cobalamin transport proteins family. In terms of assembly, interacts with CUBN (via CUB domains). As to expression, gastric mucosa.

The protein resides in the secreted. Functionally, promotes absorption of the essential vitamin cobalamin (Cbl) in the ileum. After interaction with CUBN, the CBLIF-cobalamin complex is internalized via receptor-mediated endocytosis. The polypeptide is Cobalamin binding intrinsic factor (Cblif) (Mus musculus (Mouse)).